The following is a 185-amino-acid chain: Peptidyl-tRNA hydrolase (185 aa).

Tyr-14 contacts tRNA. The active-site Proton acceptor is His-19. TRNA contacts are provided by Tyr-65, Asn-67, and Asn-113.

This sequence belongs to the PTH family. Monomer.

It localises to the cytoplasm. It catalyses the reaction an N-acyl-L-alpha-aminoacyl-tRNA + H2O = an N-acyl-L-amino acid + a tRNA + H(+). Its function is as follows. Hydrolyzes ribosome-free peptidyl-tRNAs (with 1 or more amino acids incorporated), which drop off the ribosome during protein synthesis, or as a result of ribosome stalling. In terms of biological role, catalyzes the release of premature peptidyl moieties from peptidyl-tRNA molecules trapped in stalled 50S ribosomal subunits, and thus maintains levels of free tRNAs and 50S ribosomes. The protein is Peptidyl-tRNA hydrolase of Rickettsia akari (strain Hartford).